Reading from the N-terminus, the 570-residue chain is MALSGHVLIDPARLPRDTGPELMWAPSLRNSLRVSPEALELAEREAERARSERWDRCAQVLKNRLLRVELDGIMRDHLARAEEIRQDLDAVVAFSDGLESMQVRSPSTGGRSAPAPPSPSPAQPFTRLTGNAQYAVSISPTDPPLMVAGSLAQTLLGNLYGNINQWVPSFGPWYRTMSANAMQRRVFPKQLRGNLNFTNSVSLKLMTEVVAVLEGTTQDFFSDVRHLPDLQAALILSVAYLLLQGGSSHQQRPLPASREELLELGPESLEKIIADLKAKSPGGNFMILTSGNKEARQSIAPLNRQAAYPPGTFADNKIYNLFVGAGLLPTTAALNVPGAAGRDRDLVYRIANQIFGEDVPPFSSHQWNLRVGLAALEALMLVYTLCETANLAEAATRRLHLSSLLPQAMQRRKPAMASAGMPGAYPVQTLFRHGELFRFIWAHYVRPTVAADPQASISSLFPGLVLLALELKLMDGQAPSHYAINLTGQKFDTLFEIINQKLLFHDPAAMLAARTQLRLAFEDGVGVALGRPSPMLAAREILERQFSASDDYDRLYFLTLGYLASPVAPS.

The interaction with major capsid protein/MCP stretch occupies residues 1 to 54; the sequence is MALSGHVLIDPARLPRDTGPELMWAPSLRNSLRVSPEALELAEREAERARSERW. A disordered region spans residues 102-123; sequence QVRSPSTGGRSAPAPPSPSPAQ.

The protein belongs to the herpesviridae CVC2 protein family. Heterodimerizes with CVC1. Interacts with major capsid protein/MCP and triplex capsid protein 1/TRX1 at the pentamer vertices. Interacts with the large tegument protein/LTP.

The protein localises to the virion. Its subcellular location is the host nucleus. Functionally, capsid vertex-specific component that plays a role during viral DNA encapsidation, assuring correct genome cleavage and presumably stabilizing capsids that contain full-length viral genomes. Participates in the interaction between the capsid and the tegument through interaction with the large tegument protein/LTP. This chain is Capsid vertex component 2, found in Homo sapiens (Human).